A 147-amino-acid chain; its full sequence is MMKLNLFINANETESYIDIHAPKMNDHVQSIINAVNDLDKSHTLVGYIDKEIHIINVSDVITFQVINKNVTAITSNQKFKLKLRLYELEKQLPQHFIRISKSEIVNKYYIEKLLLEPNGLIRMYLKDAHYTYSSRRFLKSIKERLSI.

One can recognise an HTH LytTR-type domain in the interval 44 to 147 (LVGYIDKEIH…LKSIKERLSI (104 aa)).

Its subcellular location is the cytoplasm. This is an uncharacterized protein from Staphylococcus aureus (strain MRSA252).